The chain runs to 293 residues: Probable endonuclease 4 (293 aa).

The Zn(2+) site is built by H78, H118, E154, D188, H191, H225, D238, H240, and E270.

The protein belongs to the AP endonuclease 2 family. Zn(2+) is required as a cofactor.

It carries out the reaction Endonucleolytic cleavage to 5'-phosphooligonucleotide end-products.. Functionally, endonuclease IV plays a role in DNA repair. It cleaves phosphodiester bonds at apurinic or apyrimidinic (AP) sites, generating a 3'-hydroxyl group and a 5'-terminal sugar phosphate. This Vibrio vulnificus (strain CMCP6) protein is Probable endonuclease 4.